A 135-amino-acid chain; its full sequence is Large ribosomal subunit protein uL18c (135 aa).

This sequence belongs to the universal ribosomal protein uL18 family. In terms of assembly, part of the 50S ribosomal subunit; contacts the 5S rRNA.

Its subcellular location is the plastid. The protein localises to the chloroplast. In terms of biological role, binds 5S rRNA, forms part of the central protuberance of the 50S subunit. This chain is Large ribosomal subunit protein uL18c (rpl18), found in Phaeodactylum tricornutum (strain CCAP 1055/1).